A 306-amino-acid polypeptide reads, in one-letter code: Acetyl-coenzyme A carboxylase carboxyl transferase subunit beta (306 aa).

The CoA carboxyltransferase N-terminal domain occupies 27 to 296 (LWHKCPSCEA…PKFVAAPIEP (270 aa)). Residues C31, C34, C50, and C53 each contribute to the Zn(2+) site. The segment at 31–53 (CPSCEAVLYRPELEKTLDVCPKC) adopts a C4-type zinc-finger fold.

This sequence belongs to the AccD/PCCB family. Acetyl-CoA carboxylase is a heterohexamer composed of biotin carboxyl carrier protein (AccB), biotin carboxylase (AccC) and two subunits each of ACCase subunit alpha (AccA) and ACCase subunit beta (AccD). Zn(2+) serves as cofactor.

It localises to the cytoplasm. It catalyses the reaction N(6)-carboxybiotinyl-L-lysyl-[protein] + acetyl-CoA = N(6)-biotinyl-L-lysyl-[protein] + malonyl-CoA. It functions in the pathway lipid metabolism; malonyl-CoA biosynthesis; malonyl-CoA from acetyl-CoA: step 1/1. In terms of biological role, component of the acetyl coenzyme A carboxylase (ACC) complex. Biotin carboxylase (BC) catalyzes the carboxylation of biotin on its carrier protein (BCCP) and then the CO(2) group is transferred by the transcarboxylase to acetyl-CoA to form malonyl-CoA. The chain is Acetyl-coenzyme A carboxylase carboxyl transferase subunit beta from Pseudomonas fluorescens (strain Pf0-1).